A 239-amino-acid polypeptide reads, in one-letter code: MEKEKGNDDGIPDQENSLDFSEHFNQLELLETHGHLIPTGTQSLWVGNSDEDEEQDDKNEEWYRLQEKKMEKDPSRLLLWAAEKNRLTTVRRLLSEKATHVNTRDEDEYTPLHRAAYSGHLDIVQELIAQGADVHAVTVDGWTPLHSACKWNNTRVASFLLQHDADINAQTKGLLTPLHLAAGNRDSKDTLELLLMNRYVKPGLKNNLEETAFDIARRTSIYHYLFEIVEGCTNSSPQS.

A Phosphoserine modification is found at serine 49. 4 ANK repeats span residues 73-103, 107-136, 140-169, and 173-206; these read DPSR…HVNT, DEYT…DVHA, DGWT…DINA, and GLLT…GLKN.

In terms of tissue distribution, widely expressed in fetus, at a high level in fetal liver, brain and lung.

The protein resides in the nucleus. In terms of biological role, induces HBG1 expression. May have a role in spermatogenesis where it promotes autophagy in response to serum starvation, via the NF-kappaB pathway. In Homo sapiens (Human), this protein is Ankyrin repeat domain-containing protein 49 (ANKRD49).